Reading from the N-terminus, the 226-residue chain is Elongation factor G (226 aa).

This sequence belongs to the GTP-binding elongation factor family. EF-G/EF-2 subfamily.

It is found in the cytoplasm. In terms of biological role, catalyzes the GTP-dependent ribosomal translocation step during translation elongation. During this step, the ribosome changes from the pre-translocational (PRE) to the post-translocational (POST) state as the newly formed A-site-bound peptidyl-tRNA and P-site-bound deacylated tRNA move to the P and E sites, respectively. Catalyzes the coordinated movement of the two tRNA molecules, the mRNA and conformational changes in the ribosome. This Neisseria gonorrhoeae protein is Elongation factor G (fusA).